The primary structure comprises 184 residues: Cytidylate kinase (184 aa).

Position 8-16 (8-16 (GQPGSGKTT)) interacts with ATP.

The protein belongs to the cytidylate kinase family. Type 2 subfamily.

It localises to the cytoplasm. The enzyme catalyses CMP + ATP = CDP + ADP. It carries out the reaction dCMP + ATP = dCDP + ADP. The chain is Cytidylate kinase from Pyrobaculum aerophilum (strain ATCC 51768 / DSM 7523 / JCM 9630 / CIP 104966 / NBRC 100827 / IM2).